We begin with the raw amino-acid sequence, 415 residues long: Type II methyltransferase M.DdeI (415 aa).

Residues 1-373 (MNIIDLFAGC…ERISWYFENI (373 aa)) form the SAM-dependent MTase C5-type domain. Residue Cys-76 is part of the active site.

Belongs to the class I-like SAM-binding methyltransferase superfamily. C5-methyltransferase family.

The enzyme catalyses a 2'-deoxycytidine in DNA + S-adenosyl-L-methionine = a 5-methyl-2'-deoxycytidine in DNA + S-adenosyl-L-homocysteine + H(+). Functionally, a methylase that recognizes the double-stranded sequence 5'-CTNAG-3', methylates C-1 on both strands, and protects the DNA from cleavage by the DdeI endonuclease. This Desulfomicrobium norvegicum (strain DSM 1741 / NCIMB 8310) (Desulfovibrio baculatus (strain Norway 4)) protein is Type II methyltransferase M.DdeI (ddeIM).